Reading from the N-terminus, the 1342-residue chain is DNA-directed RNA polymerase subunit beta (1342 aa).

It belongs to the RNA polymerase beta chain family. In terms of assembly, the RNAP catalytic core consists of 2 alpha, 1 beta, 1 beta' and 1 omega subunit. When a sigma factor is associated with the core the holoenzyme is formed, which can initiate transcription.

It catalyses the reaction RNA(n) + a ribonucleoside 5'-triphosphate = RNA(n+1) + diphosphate. In terms of biological role, DNA-dependent RNA polymerase catalyzes the transcription of DNA into RNA using the four ribonucleoside triphosphates as substrates. This Salmonella typhi protein is DNA-directed RNA polymerase subunit beta.